The chain runs to 105 residues: SH3 domain-binding glutamic acid-rich-like protein 2 (105 aa).

The SH3-binding motif lies at 61-67 (KGNPLPP).

It belongs to the SH3BGR family.

Its subcellular location is the nucleus. The protein is SH3 domain-binding glutamic acid-rich-like protein 2 (sh3bgrl2) of Danio rerio (Zebrafish).